A 156-amino-acid polypeptide reads, in one-letter code: ATP synthase subunit b (156 aa).

The chain crosses the membrane as a helical span at residues 7-27; it reads FFAQMVVFFILWWVVAKFIWP.

This sequence belongs to the ATPase B chain family. In terms of assembly, F-type ATPases have 2 components, F(1) - the catalytic core - and F(0) - the membrane proton channel. F(1) has five subunits: alpha(3), beta(3), gamma(1), delta(1), epsilon(1). F(0) has three main subunits: a(1), b(2) and c(10-14). The alpha and beta chains form an alternating ring which encloses part of the gamma chain. F(1) is attached to F(0) by a central stalk formed by the gamma and epsilon chains, while a peripheral stalk is formed by the delta and b chains.

It localises to the cell inner membrane. In terms of biological role, f(1)F(0) ATP synthase produces ATP from ADP in the presence of a proton or sodium gradient. F-type ATPases consist of two structural domains, F(1) containing the extramembraneous catalytic core and F(0) containing the membrane proton channel, linked together by a central stalk and a peripheral stalk. During catalysis, ATP synthesis in the catalytic domain of F(1) is coupled via a rotary mechanism of the central stalk subunits to proton translocation. Component of the F(0) channel, it forms part of the peripheral stalk, linking F(1) to F(0). This Cupriavidus metallidurans (strain ATCC 43123 / DSM 2839 / NBRC 102507 / CH34) (Ralstonia metallidurans) protein is ATP synthase subunit b.